The chain runs to 139 residues: uncharacterized protein (139 aa).

The HTH marR-type domain maps to 8 to 139 (ANLLDHALTK…FLAIIAKLAQ (132 aa)). The H-T-H motif DNA-binding region spans 53–76 (IKDILKEVTLSPSATTTALNHLEQ).

This is an uncharacterized protein from Bacillus subtilis (strain 168).